Consider the following 132-residue polypeptide: MIKSWKPQELSISYHQFTVFQKDSTPPVMDWTDEAIEKGYAAADGAISFEAQRNTKAFILFRLNSSETVNSYEKKVTVPFHVTENGIHIESIMSKRLSFDLPKGDYQLTCWTVPAEMSDLHADTYIIDAVSV.

In terms of assembly, this protein is a subunit of a 75 kDa protein complex, which governs binding and entry of donor DNA. The complex is a tetramer of two subunits of the DNA-entry nuclease and two subunits of a competence-specific protein. Only the complex is able to bind ds- and ss-DNA.

The protein localises to the cell membrane. Its function is as follows. Plays a role in the competence of cells to be transformed. It inhibits the activity of the DNA-entry nuclease. The chain is DNA-entry nuclease inhibitor (nin) from Bacillus subtilis (strain 168).